A 182-amino-acid polypeptide reads, in one-letter code: MENNFQVFRLISENFSEVSHSIGLNSDFLEANVLNIMLLLFGLIYVLKQFLGSLLTIRQEKVIFAISECEERLQQANNRLLESEKQLEQTQLVITQVLNDAEITAQKVRQSILDKGKIDVEKLIGASKASIVVAENQINQQIKQKITALAIQKVSSQLKAQVDTTMQAKIIDSSIIKLRGDI.

Residues 33–55 traverse the membrane as a helical segment; it reads VLNIMLLLFGLIYVLKQFLGSLL.

Belongs to the ATPase B chain family. F-type ATPases have 2 components, F(1) - the catalytic core - and F(0) - the membrane proton channel. F(1) has five subunits: alpha(3), beta(3), gamma(1), delta(1), epsilon(1). F(0) has four main subunits: a(1), b(1), b'(1) and c(10-14). The alpha and beta chains form an alternating ring which encloses part of the gamma chain. F(1) is attached to F(0) by a central stalk formed by the gamma and epsilon chains, while a peripheral stalk is formed by the delta, b and b' chains.

Its subcellular location is the plastid. It is found in the chloroplast thylakoid membrane. In terms of biological role, f(1)F(0) ATP synthase produces ATP from ADP in the presence of a proton or sodium gradient. F-type ATPases consist of two structural domains, F(1) containing the extramembraneous catalytic core and F(0) containing the membrane proton channel, linked together by a central stalk and a peripheral stalk. During catalysis, ATP synthesis in the catalytic domain of F(1) is coupled via a rotary mechanism of the central stalk subunits to proton translocation. Its function is as follows. Component of the F(0) channel, it forms part of the peripheral stalk, linking F(1) to F(0). In Antithamnion sp. (Red alga), this protein is ATP synthase subunit b, chloroplastic.